Reading from the N-terminus, the 107-residue chain is Nucleoid-associated protein HNE_0371 (107 aa).

This sequence belongs to the YbaB/EbfC family. In terms of assembly, homodimer.

It localises to the cytoplasm. The protein localises to the nucleoid. Functionally, binds to DNA and alters its conformation. May be involved in regulation of gene expression, nucleoid organization and DNA protection. The protein is Nucleoid-associated protein HNE_0371 of Hyphomonas neptunium (strain ATCC 15444).